The chain runs to 453 residues: Allantoinase (453 aa).

Residues His-59, His-61, Lys-146, His-186, His-242, and Asp-315 each contribute to the Zn(2+) site. Lys-146 is modified (N6-carboxylysine).

Belongs to the metallo-dependent hydrolases superfamily. Allantoinase family. In terms of assembly, homotetramer. It depends on Zn(2+) as a cofactor. Carboxylation allows a single lysine to coordinate two zinc ions.

It carries out the reaction (S)-allantoin + H2O = allantoate + H(+). The protein operates within nitrogen metabolism; (S)-allantoin degradation; allantoate from (S)-allantoin: step 1/1. Functionally, catalyzes the conversion of allantoin (5-ureidohydantoin) to allantoic acid by hydrolytic cleavage of the five-member hydantoin ring. The protein is Allantoinase of Escherichia coli O139:H28 (strain E24377A / ETEC).